Here is a 336-residue protein sequence, read N- to C-terminus: 3-isopropylmalate dehydrogenase (336 aa).

Residues Arg-86, Arg-96, Arg-117, and Asp-201 each contribute to the substrate site. Asp-201, Asp-225, and Asp-229 together coordinate Mg(2+). 258–270 lines the NAD(+) pocket; it reads GAAFDIAGKGIAN.

It belongs to the isocitrate and isopropylmalate dehydrogenases family. In terms of assembly, homotetramer. It depends on Mg(2+) as a cofactor. The cofactor is Mn(2+).

Its subcellular location is the cytoplasm. The enzyme catalyses (2R,3S)-3-isopropylmalate + NAD(+) = 4-methyl-2-oxopentanoate + CO2 + NADH. It functions in the pathway amino-acid biosynthesis; L-leucine biosynthesis; L-leucine from 3-methyl-2-oxobutanoate: step 3/4. Functionally, catalyzes the oxidation of 3-carboxy-2-hydroxy-4-methylpentanoate (3-isopropylmalate) to 3-carboxy-4-methyl-2-oxopentanoate. The product decarboxylates to 4-methyl-2 oxopentanoate. The polypeptide is 3-isopropylmalate dehydrogenase (leuB) (Saccharolobus solfataricus (strain ATCC 35092 / DSM 1617 / JCM 11322 / P2) (Sulfolobus solfataricus)).